We begin with the raw amino-acid sequence, 170 residues long: Putative pre-16S rRNA nuclease (170 aa).

The tract at residues 1 to 25 (MVPAQHRPPDRPGDPAHDPGRGRRL) is disordered. Basic and acidic residues predominate over residues 7-21 (RPPDRPGDPAHDPGR).

Belongs to the YqgF nuclease family.

It localises to the cytoplasm. Functionally, could be a nuclease involved in processing of the 5'-end of pre-16S rRNA. This chain is Putative pre-16S rRNA nuclease, found in Mycobacterium tuberculosis (strain ATCC 25177 / H37Ra).